The chain runs to 377 residues: Aspartate aminotransferase (377 aa).

Positions 37, 123, and 173 each coordinate L-aspartate. Lysine 234 carries the post-translational modification N6-(pyridoxal phosphate)lysine. Arginine 353 contacts L-aspartate.

It belongs to the class-I pyridoxal-phosphate-dependent aminotransferase family. Homodimer. Pyridoxal 5'-phosphate is required as a cofactor.

Its subcellular location is the cytoplasm. The enzyme catalyses L-aspartate + 2-oxoglutarate = oxaloacetate + L-glutamate. The protein is Aspartate aminotransferase (aspC) of Thermotoga maritima (strain ATCC 43589 / DSM 3109 / JCM 10099 / NBRC 100826 / MSB8).